We begin with the raw amino-acid sequence, 149 residues long: Transcriptional regulator MraZ (149 aa).

SpoVT-AbrB domains follow at residues 6–52 (RSHR…PLPD) and 81–124 (AELM…DQGR).

This sequence belongs to the MraZ family. Forms oligomers.

It is found in the cytoplasm. Its subcellular location is the nucleoid. The sequence is that of Transcriptional regulator MraZ from Nitratidesulfovibrio vulgaris (strain DSM 19637 / Miyazaki F) (Desulfovibrio vulgaris).